Reading from the N-terminus, the 217-residue chain is Probable nicotinate-nucleotide adenylyltransferase (217 aa).

This sequence belongs to the NadD family.

It carries out the reaction nicotinate beta-D-ribonucleotide + ATP + H(+) = deamido-NAD(+) + diphosphate. The protein operates within cofactor biosynthesis; NAD(+) biosynthesis; deamido-NAD(+) from nicotinate D-ribonucleotide: step 1/1. Functionally, catalyzes the reversible adenylation of nicotinate mononucleotide (NaMN) to nicotinic acid adenine dinucleotide (NaAD). The chain is Probable nicotinate-nucleotide adenylyltransferase from Dechloromonas aromatica (strain RCB).